Reading from the N-terminus, the 346-residue chain is Phosphoribosylformylglycinamidine cyclo-ligase (346 aa).

It belongs to the AIR synthase family.

The protein localises to the cytoplasm. It carries out the reaction 2-formamido-N(1)-(5-O-phospho-beta-D-ribosyl)acetamidine + ATP = 5-amino-1-(5-phospho-beta-D-ribosyl)imidazole + ADP + phosphate + H(+). The protein operates within purine metabolism; IMP biosynthesis via de novo pathway; 5-amino-1-(5-phospho-D-ribosyl)imidazole from N(2)-formyl-N(1)-(5-phospho-D-ribosyl)glycinamide: step 2/2. The sequence is that of Phosphoribosylformylglycinamidine cyclo-ligase from Bacillus velezensis (strain DSM 23117 / BGSC 10A6 / LMG 26770 / FZB42) (Bacillus amyloliquefaciens subsp. plantarum).